Consider the following 492-residue polypeptide: 3-octaprenyl-4-hydroxybenzoate carboxy-lyase (492 aa).

Asparagine 177 contributes to the Mn(2+) binding site. Residues 180–182 (IYR), 194–196 (RWL), and 199–200 (RG) contribute to the prenylated FMN site. Glutamate 243 serves as a coordination point for Mn(2+). Aspartate 292 functions as the Proton donor in the catalytic mechanism.

Belongs to the UbiD family. In terms of assembly, homohexamer. Prenylated FMN serves as cofactor. Requires Mn(2+) as cofactor.

It is found in the cell membrane. The catalysed reaction is a 4-hydroxy-3-(all-trans-polyprenyl)benzoate + H(+) = a 2-(all-trans-polyprenyl)phenol + CO2. It functions in the pathway cofactor biosynthesis; ubiquinone biosynthesis. In terms of biological role, catalyzes the decarboxylation of 3-octaprenyl-4-hydroxy benzoate to 2-octaprenylphenol, an intermediate step in ubiquinone biosynthesis. The polypeptide is 3-octaprenyl-4-hydroxybenzoate carboxy-lyase (Neisseria meningitidis serogroup A / serotype 4A (strain DSM 15465 / Z2491)).